The chain runs to 754 residues: C2H2 finger domain transcription factor crzA (754 aa).

Disordered stretches follow at residues 1 to 51 (MASQ…TVTG), 63 to 150 (SFAN…FSDL), 187 to 227 (VHQQ…QGST), 269 to 299 (QGHRRAPSEVSEISSAAPSPYLSQHESFDGV), and 384 to 543 (GAEG…RVQK). Residues 30-44 (HQQQQQQQHQQHQGQ) show a composition bias toward low complexity. 2 stretches are compositionally biased toward polar residues: residues 63 to 80 (SFANSSFDPNSNNVSPSA) and 94 to 114 (TPASQTDQNYANSLQIPQSYG). A compositionally biased stretch (low complexity) spans 130 to 140 (QQQSQQQHHQQ). The span at 141-150 (PSLDDNFSDL) shows a compositional bias: polar residues. Low complexity predominate over residues 189–209 (QQSHPTQIPSSHSSTSPQISP). Polar residues-rich tracts occupy residues 210 to 227 (LEQQQHSSPGPMSTQGST) and 279 to 293 (SEISSAAPSPYLSQH). Low complexity-rich tracts occupy residues 459–472 (STSRLRSSSTSSSL) and 491–515 (RQQQSNPSSRDPSPSRSNRRLSTSS). 2 consecutive C2H2-type zinc fingers follow at residues 548-570 (FQCNLCPKRFTRAYNLRSHLRTH) and 576-598 (FVCTVCGKAFARQHDRKRHEGLH). The C2H2-type 3; degenerate zinc-finger motif lies at 604 to 635 (FVCQGELSRGGQWGCGRRFARADALGRHFRSE). The tract at residues 708–737 (ADDPSDIGGRSSFDASSGNEFGFEDDDSGL) is disordered.

The protein localises to the nucleus. It localises to the cytoplasm. Transcription factor involved in the regulation of calcium ion homeostasis. Regulates genes encoding calcium transporters, transcription factors and genes that could be directly or indirectly involved in calcium metabolism. Supports especially pmcA, pmcB and pmcC expression encoding for calcium-translocating P-type ATPases. Binds target promoters at motif A[GT][CG]CA[AC][AG]. Plays an essential role germination, radial growth, and asexual development. Also plays a major role in proper chitin and glucan incorporation into the cell wall. Involved in the high-osmolarity glycerol response (HOG) signaling pathway. Required for pathogenicity in an experimental murine model of invasive pulmonary aspergillosis. This is C2H2 finger domain transcription factor crzA from Aspergillus fumigatus (strain ATCC MYA-4609 / CBS 101355 / FGSC A1100 / Af293) (Neosartorya fumigata).